The following is a 236-amino-acid chain: Large ribosomal subunit protein uL3 (236 aa).

Residues 215-236 (PAPEPAAPVAAAAAGTGEEASA) are disordered. The segment covering 221–236 (APVAAAAAGTGEEASA) has biased composition (low complexity).

This sequence belongs to the universal ribosomal protein uL3 family. Part of the 50S ribosomal subunit. Forms a cluster with proteins L14 and L19.

Its function is as follows. One of the primary rRNA binding proteins, it binds directly near the 3'-end of the 23S rRNA, where it nucleates assembly of the 50S subunit. In Parafrankia sp. (strain EAN1pec), this protein is Large ribosomal subunit protein uL3.